A 374-amino-acid chain; its full sequence is Spore germination protein GerLB (374 aa).

10 helical membrane-spanning segments follow: residues 16-36 (IGFA…PRDI), 44-64 (DGWI…WFVT), 86-106 (PVAY…TAYE), 122-142 (TPIQ…IAGS), 149-169 (LNVL…LLNI), 192-212 (VKNS…AVLL), 227-247 (AVMV…SVFT), 279-301 (FFTT…ASLL), 313-333 (IFIF…SSLN), and 341-361 (YLAW…LIVY).

The protein belongs to the amino acid-polyamine-organocation (APC) superfamily. Spore germination protein (SGP) (TC 2.A.3.9) family.

It localises to the membrane. Its function is as follows. Contributes to the L-alanine germination response. In Bacillus cereus, this protein is Spore germination protein GerLB (gerLB).